The primary structure comprises 220 residues: Ribose-5-phosphate isomerase A (220 aa).

Residues 28-31 (TGST), 81-84 (DGAD), and 94-97 (KGGG) contribute to the substrate site. E103 functions as the Proton acceptor in the catalytic mechanism. K121 contributes to the substrate binding site.

It belongs to the ribose 5-phosphate isomerase family. In terms of assembly, homodimer.

The catalysed reaction is aldehydo-D-ribose 5-phosphate = D-ribulose 5-phosphate. Its pathway is carbohydrate degradation; pentose phosphate pathway; D-ribose 5-phosphate from D-ribulose 5-phosphate (non-oxidative stage): step 1/1. In terms of biological role, catalyzes the reversible conversion of ribose-5-phosphate to ribulose 5-phosphate. The protein is Ribose-5-phosphate isomerase A of Aromatoleum aromaticum (strain DSM 19018 / LMG 30748 / EbN1) (Azoarcus sp. (strain EbN1)).